The sequence spans 386 residues: Succinate--CoA ligase [ADP-forming] subunit beta (386 aa).

The region spanning 9–244 (KALLRAAGIK…TTQEDHRETQ (236 aa)) is the ATP-grasp domain. Residues K46, 53 to 55 (GRG), E100, and R103 contribute to the ATP site. The Mg(2+) site is built by N199 and D213. Residues N264 and 321-323 (GIV) contribute to the substrate site.

It belongs to the succinate/malate CoA ligase beta subunit family. In terms of assembly, heterotetramer of two alpha and two beta subunits. Mg(2+) serves as cofactor.

The catalysed reaction is succinate + ATP + CoA = succinyl-CoA + ADP + phosphate. It catalyses the reaction GTP + succinate + CoA = succinyl-CoA + GDP + phosphate. It participates in carbohydrate metabolism; tricarboxylic acid cycle; succinate from succinyl-CoA (ligase route): step 1/1. Its function is as follows. Succinyl-CoA synthetase functions in the citric acid cycle (TCA), coupling the hydrolysis of succinyl-CoA to the synthesis of either ATP or GTP and thus represents the only step of substrate-level phosphorylation in the TCA. The beta subunit provides nucleotide specificity of the enzyme and binds the substrate succinate, while the binding sites for coenzyme A and phosphate are found in the alpha subunit. The sequence is that of Succinate--CoA ligase [ADP-forming] subunit beta from Dichelobacter nodosus (strain VCS1703A).